The primary structure comprises 96 residues: Putative pterin-4-alpha-carbinolamine dehydratase (96 aa).

This sequence belongs to the pterin-4-alpha-carbinolamine dehydratase family.

It carries out the reaction (4aS,6R)-4a-hydroxy-L-erythro-5,6,7,8-tetrahydrobiopterin = (6R)-L-erythro-6,7-dihydrobiopterin + H2O. This chain is Putative pterin-4-alpha-carbinolamine dehydratase, found in Prochlorococcus marinus (strain SARG / CCMP1375 / SS120).